The following is a 486-amino-acid chain: Probable glycine dehydrogenase (decarboxylating) subunit 2 (486 aa).

The residue at position 273 (Lys273) is an N6-(pyridoxal phosphate)lysine.

It belongs to the GcvP family. C-terminal subunit subfamily. As to quaternary structure, the glycine cleavage system is composed of four proteins: P, T, L and H. In this organism, the P 'protein' is a heterodimer of two subunits. Pyridoxal 5'-phosphate is required as a cofactor.

The enzyme catalyses N(6)-[(R)-lipoyl]-L-lysyl-[glycine-cleavage complex H protein] + glycine + H(+) = N(6)-[(R)-S(8)-aminomethyldihydrolipoyl]-L-lysyl-[glycine-cleavage complex H protein] + CO2. In terms of biological role, the glycine cleavage system catalyzes the degradation of glycine. The P protein binds the alpha-amino group of glycine through its pyridoxal phosphate cofactor; CO(2) is released and the remaining methylamine moiety is then transferred to the lipoamide cofactor of the H protein. This is Probable glycine dehydrogenase (decarboxylating) subunit 2 from Alkaliphilus oremlandii (strain OhILAs) (Clostridium oremlandii (strain OhILAs)).